The chain runs to 181 residues: Peptide deformylase 2 (181 aa).

Fe cation-binding residues include Cys-109 and His-151. Glu-152 is an active-site residue. Position 155 (His-155) interacts with Fe cation.

Belongs to the polypeptide deformylase family. Requires Fe(2+) as cofactor.

The enzyme catalyses N-terminal N-formyl-L-methionyl-[peptide] + H2O = N-terminal L-methionyl-[peptide] + formate. Functionally, removes the formyl group from the N-terminal Met of newly synthesized proteins. Requires at least a dipeptide for an efficient rate of reaction. N-terminal L-methionine is a prerequisite for activity but the enzyme has broad specificity at other positions. The sequence is that of Peptide deformylase 2 from Shewanella oneidensis (strain ATCC 700550 / JCM 31522 / CIP 106686 / LMG 19005 / NCIMB 14063 / MR-1).